We begin with the raw amino-acid sequence, 804 residues long: Phenylalanine--tRNA ligase beta subunit (804 aa).

The region spanning 38 to 148 (RSYLKGFVIA…EDVPIGASFA (111 aa)) is the tRNA-binding domain. One can recognise a B5 domain in the interval 401 to 476 (PEIRQITFPL…RIYGLDKIKP (76 aa)). Residues D454, D460, E463, and E464 each coordinate Mg(2+). The 94-residue stretch at 710–803 (SSLQMVRRDF…VTRMTGASLR (94 aa)) folds into the FDX-ACB domain.

It belongs to the phenylalanyl-tRNA synthetase beta subunit family. Type 1 subfamily. Tetramer of two alpha and two beta subunits. Mg(2+) is required as a cofactor.

The protein resides in the cytoplasm. The catalysed reaction is tRNA(Phe) + L-phenylalanine + ATP = L-phenylalanyl-tRNA(Phe) + AMP + diphosphate + H(+). The chain is Phenylalanine--tRNA ligase beta subunit from Bartonella henselae (strain ATCC 49882 / DSM 28221 / CCUG 30454 / Houston 1) (Rochalimaea henselae).